The primary structure comprises 325 residues: Elongation factor P--(R)-beta-lysine ligase (325 aa).

Substrate is bound at residue 76–78; sequence SPE. ATP is bound by residues 100-102 and asparagine 109; that span reads RNE. Tyrosine 118 contributes to the substrate binding site. 244–245 lines the ATP pocket; the sequence is EL. Residue glutamate 251 coordinates substrate. ATP is bound at residue glycine 300.

This sequence belongs to the class-II aminoacyl-tRNA synthetase family. EpmA subfamily. Homodimer.

The enzyme catalyses D-beta-lysine + L-lysyl-[protein] + ATP = N(6)-((3R)-3,6-diaminohexanoyl)-L-lysyl-[protein] + AMP + diphosphate + H(+). With EpmB is involved in the beta-lysylation step of the post-translational modification of translation elongation factor P (EF-P) on 'Lys-34'. Catalyzes the ATP-dependent activation of (R)-beta-lysine produced by EpmB, forming a lysyl-adenylate, from which the beta-lysyl moiety is then transferred to the epsilon-amino group of EF-P 'Lys-34'. The chain is Elongation factor P--(R)-beta-lysine ligase from Salmonella dublin (strain CT_02021853).